A 394-amino-acid polypeptide reads, in one-letter code: QWRF motif-containing protein 7 (394 aa).

Residues 1–171 are disordered; that stretch reads MATTGRRLRP…ESPVSKAKIR (171 aa). Over residues 14 to 67 the composition is skewed to low complexity; sequence NNNRSRTISSSISLPVSLNASLSSSTSSSSSSSPSNSSKRVMITRSQSTTRSSR. Residues 85 to 96 are compositionally biased toward polar residues; it reads NSASRSQEINNG. Residues 97–110 show a composition bias toward basic and acidic residues; that stretch reads RSRESFARYLEQRT. Polar residues-rich tracts occupy residues 111-120 and 142-157; these read RGSPRSNASS and TMKTPLSSSAPTTSMC. The short motif at 211 to 214 is the QWRF motif element; the sequence is QWRF.

Belongs to the QWRF family.

This is QWRF motif-containing protein 7 (QWRF7) from Arabidopsis thaliana (Mouse-ear cress).